A 125-amino-acid chain; its full sequence is Small ribosomal subunit protein uS12c (125 aa).

This sequence belongs to the universal ribosomal protein uS12 family. As to quaternary structure, part of the 30S ribosomal subunit.

The protein resides in the plastid. It is found in the chloroplast. With S4 and S5 plays an important role in translational accuracy. Located at the interface of the 30S and 50S subunits. This Tupiella akineta (Green alga) protein is Small ribosomal subunit protein uS12c (rps12).